The sequence spans 100 residues: NADH-quinone oxidoreductase subunit K (100 aa).

The next 3 helical transmembrane spans lie at Leu4–Val24, Ile28–Val48, and Ile60–Leu80.

It belongs to the complex I subunit 4L family. As to quaternary structure, NDH-1 is composed of 13 different subunits. Subunits NuoA, H, J, K, L, M, N constitute the membrane sector of the complex.

The protein localises to the cell membrane. It catalyses the reaction a quinone + NADH + 5 H(+)(in) = a quinol + NAD(+) + 4 H(+)(out). Functionally, NDH-1 shuttles electrons from NADH, via FMN and iron-sulfur (Fe-S) centers, to quinones in the respiratory chain. The immediate electron acceptor for the enzyme in this species is believed to be ubiquinone. Couples the redox reaction to proton translocation (for every two electrons transferred, four hydrogen ions are translocated across the cytoplasmic membrane), and thus conserves the redox energy in a proton gradient. This Buchnera aphidicola subsp. Acyrthosiphon pisum (strain 5A) protein is NADH-quinone oxidoreductase subunit K.